A 244-amino-acid polypeptide reads, in one-letter code: 5-oxoprolinase subunit A (244 aa).

Belongs to the LamB/PxpA family. As to quaternary structure, forms a complex composed of PxpA, PxpB and PxpC.

The enzyme catalyses 5-oxo-L-proline + ATP + 2 H2O = L-glutamate + ADP + phosphate + H(+). In terms of biological role, catalyzes the cleavage of 5-oxoproline to form L-glutamate coupled to the hydrolysis of ATP to ADP and inorganic phosphate. This Salmonella paratyphi C (strain RKS4594) protein is 5-oxoprolinase subunit A.